Here is a 94-residue protein sequence, read N- to C-terminus: UPF0298 protein SZO_03600 (94 aa).

Belongs to the UPF0298 family.

The protein localises to the cytoplasm. The sequence is that of UPF0298 protein SZO_03600 from Streptococcus equi subsp. zooepidemicus (strain H70).